Reading from the N-terminus, the 352-residue chain is C-C chemokine receptor type 5 (352 aa).

The Extracellular segment spans residues 1–30; that stretch reads MDYQVSSPTYDIDYYTSEPCQKINVKQIAA. Tyr3 bears the Sulfotyrosine mark. Ser6 and Ser7 each carry an O-linked (GalNAc...) serine glycan. A sulfotyrosine mark is found at Tyr10, Tyr14, and Tyr15. 2 cysteine pairs are disulfide-bonded: Cys20-Cys269 and Cys101-Cys178. A helical transmembrane segment spans residues 31-58; the sequence is RLLPPLYSLVFIFGFVGNILVVLILINC. Residues 59–68 lie on the Cytoplasmic side of the membrane; that stretch reads KRLKSMTDIY. A helical membrane pass occupies residues 69 to 89; sequence LLNLAISDLLFLLTVPFWAHY. Residues 90 to 102 lie on the Extracellular side of the membrane; the sequence is AAAQWDFGNTMCQ. The helical transmembrane segment at 103–124 threads the bilayer; sequence LLTGLYFIGFFSGIFFIILLTI. Residues 125–141 are Cytoplasmic-facing; that stretch reads DRYLAIVHAVFALKART. A helical membrane pass occupies residues 142-166; the sequence is VTFGVVTSVITWVVAVFASLPRIIF. At 167–198 the chain is on the extracellular side; sequence TRSQREGLHYTCSSHFPYSQYQFWKNFQTLKI. The helical transmembrane segment at 199-218 threads the bilayer; sequence VILGLVLPLLVMVICYSGIL. Topologically, residues 219–235 are cytoplasmic; the sequence is KTLLRCRNEKKRHRAVR. The chain crosses the membrane as a helical span at residues 236-260; the sequence is LIFTIMIVYFLFWAPYNIVLLLNTF. The Extracellular segment spans residues 261 to 277; the sequence is QEFFGLNNCSSSNRLDQ. A helical transmembrane segment spans residues 278–301; the sequence is AMQVTETLGMTHCCINPIIYAFVG. Over 302–352 the chain is Cytoplasmic; the sequence is EKFRNYLLVFFQKHIAKRFCKCCSIFQQEAPERASSVYTRSTGEQETSVGL. 3 S-palmitoyl cysteine lipidation sites follow: Cys321, Cys323, and Cys324. Phosphoserine; by BARK1 is present on residues Ser336, Ser337, Ser342, and Ser349.

This sequence belongs to the G-protein coupled receptor 1 family. Interacts with PRAF2. Efficient ligand binding to CCL3/MIP-1alpha and CCL4/MIP-1beta requires sulfation, O-glycosylation and sialic acid modifications. Glycosylation on Ser-6 is required for efficient binding of CCL4. Interacts with GRK2. Interacts with ARRB1 and ARRB2. Interacts with CNIH4. Interacts with S100A4; this interaction stimulates T-lymphocyte chemotaxis. Sulfated on at least 2 of the N-terminal tyrosines. Sulfation is required for efficient binding of the chemokines, CCL3 and CCL4. In terms of processing, palmitoylation in the C-terminal is important for cell surface expression. Post-translationally, phosphorylation on serine residues in the C-terminal is stimulated by binding CC chemokines especially by APO-RANTES. O-glycosylated, but not N-glycosylated. Ser-6 appears to be the major site even if Ser-7 may be also O-glycosylated. Also sialylated glycans present which contribute to chemokine binding. Thr-16 and Ser-17 may also be glycosylated and, if so, with small moieties such as a T-antigen.

It is found in the cell membrane. In terms of biological role, receptor for a number of inflammatory CC-chemokines including CCL3/MIP-1-alpha, CCL4/MIP-1-beta and RANTES and subsequently transduces a signal by increasing the intracellular calcium ion level. May play a role in the control of granulocytic lineage proliferation or differentiation. Participates in T-lymphocyte migration to the infection site by acting as a chemotactic receptor. The sequence is that of C-C chemokine receptor type 5 (CCR5) from Chlorocebus tantalus (Tantalus monkey).